Consider the following 244-residue polypeptide: Tyrosine recombinase XerD-like (244 aa).

Residues 1–73 form the Core-binding (CB) domain; that stretch reads MRDRISAFLE…ACNQFLYFLY (73 aa). One can recognise a Tyr recombinase domain in the interval 90-244; that stretch reads AEKKTEKPEI…KTVLTLEKYR (155 aa). Active-site residues include Lys150 and Arg211. Residue Tyr243 is the O-(3'-phospho-DNA)-tyrosine intermediate of the active site.

It belongs to the 'phage' integrase family. XerD-like subfamily.

It is found in the cytoplasm. Functionally, putative tyrosine recombinase. Not involved in the cutting and rejoining of the recombining DNA molecules on dif(SL) site. The polypeptide is Tyrosine recombinase XerD-like (Streptococcus pneumoniae serotype 2 (strain D39 / NCTC 7466)).